The chain runs to 340 residues: Mitochondrial calcium uniporter regulator 1 (340 aa).

A disordered region spans residues 1-44 (MDSGSVAAERPRRTPSRQRLPSSGCGVPARPGVSTLPGGRSWLR). The Mitochondrial intermembrane segment spans residues 1-54 (MDSGSVAAERPRRTPSRQRLPSSGCGVPARPGVSTLPGGRSWLRPRGRAARASP). Residues 55–74 (LLFLLLVPSPRLAATATATA) traverse the membrane as a helical segment. Residues 75–316 (PRRTLAERSR…KTMLEAHKLD (242 aa)) lie on the Mitochondrial matrix side of the membrane. Residues 197 to 291 (ALQQVLSKIA…VSLHAQQDRA (95 aa)) are a coiled coil. K204 is subject to N6-acetyllysine. Residues 317 to 339 (TIKYLAGSVFTCLTVALGFYRLW) traverse the membrane as a helical segment. A topological domain (mitochondrial intermembrane) is located at residue I340.

It belongs to the CCDC90 family. Interacts (via coiled coil regions) with MCU; the interaction is direct. Interacts with SMDT1/EMRE; the interaction is direct. Interacts with PPIF.

The protein resides in the mitochondrion inner membrane. Its function is as follows. Key regulator of mitochondrial calcium uniporter (MCU) required for calcium entry into mitochondrion. Plays a direct role in uniporter-mediated calcium uptake via a direct interaction with MCU. Probably involved in the assembly of the membrane components of the uniporter complex (uniplex). The chain is Mitochondrial calcium uniporter regulator 1 from Mus musculus (Mouse).